Consider the following 295-residue polypeptide: MTASSVTSSRTGARVERLPLARFTTLGVGGEAEVWFVDNHEQLAEALEQPYRILGGGSNLVVADEGVPERVIRLTGRLAAADLTPDPDLSSTETVVTGWVGGGVPLPGLIRRLQKLGLSNLEGTVGIPAQVGGAVWMNAGTRYGEMFDGLHTLEIVSPEGMRQVTPDELDWGYRRSGIPRGHVVTRVRLKLRRSTPEAVLAKMALADQARKGQPKMKTPGCAFKNPGGVSAGKLIDEAGLKGTRIGNAMIAPEHGNFIVNLGGASSRDIHALLALIRARVGVPLELEYELWPEQA.

Residues 27 to 194 (GVGGEAEVWF…TRVRLKLRRS (168 aa)) enclose the FAD-binding PCMH-type domain. The active site involves Arg174. Residue Cys221 is the Proton donor of the active site. Glu287 is an active-site residue.

It belongs to the MurB family. Requires FAD as cofactor.

The protein resides in the cytoplasm. It carries out the reaction UDP-N-acetyl-alpha-D-muramate + NADP(+) = UDP-N-acetyl-3-O-(1-carboxyvinyl)-alpha-D-glucosamine + NADPH + H(+). The protein operates within cell wall biogenesis; peptidoglycan biosynthesis. Functionally, cell wall formation. The protein is UDP-N-acetylenolpyruvoylglucosamine reductase of Deinococcus geothermalis (strain DSM 11300 / CIP 105573 / AG-3a).